The chain runs to 288 residues: Mortality factor 4-like protein 2 (288 aa).

Over residues 1 to 15 the composition is skewed to polar residues; it reads MSSRKQGSQPRGQQS. The tract at residues 1 to 113 is disordered; the sequence is MSSRKQGSQP…RADPTVESEE (113 aa). Position 71 is a phosphoserine (Ser-71). The region spanning 117–288 is the MRG domain; it reads NRMEVKVKIP…ASAEYHRKAL (172 aa).

In terms of assembly, component of the NuA4 histone acetyltransferase complex which contains the catalytic subunit KAT5/TIP60 and the subunits EP400, TRRAP/PAF400, BRD8/SMAP, EPC1, DMAP1/DNMAP1, RUVBL1/TIP49, RUVBL2, ING3, actin, ACTL6A/BAF53A, MORF4L1/MRG15, MORF4L2/MRGX, MRGBP, YEATS4/GAS41 and VPS72/YL1. The NuA4 complex interacts with MYC and the adenovirus E1A protein. MORF4L1 may also participate in the formation of NuA4 related complexes which lack the KAT5/TIP60 catalytic subunit, but which include the SWI/SNF related protein SRCAP. Component of the MSIN3A histone deacetylase complex, which includes SIN3A, HDAC2, ARID4B, MORF4L1, RBBP4/RbAp48, and RBBP7/RbAp46. Interacts with MRFAP1 and RB1. May also interact with one or more as yet undefined members of the TLE (transducin-like enhancer of split) family of transcriptional repressors.

It localises to the nucleus. In terms of biological role, component of the NuA4 histone acetyltransferase complex which is involved in transcriptional activation of select genes principally by acetylation of nucleosomal histone H4 and H2A. This modification may both alter nucleosome - DNA interactions and promote interaction of the modified histones with other proteins which positively regulate transcription. This complex may be required for the activation of transcriptional programs associated with oncogene and proto-oncogene mediated growth induction, tumor suppressor mediated growth arrest and replicative senescence, apoptosis, and DNA repair. The NuA4 complex ATPase and helicase activities seem to be, at least in part, contributed by the association of RUVBL1 and RUVBL2 with EP400. NuA4 may also play a direct role in DNA repair when directly recruited to sites of DNA damage. Also a component of the MSIN3A complex which acts to repress transcription by deacetylation of nucleosomal histones. This chain is Mortality factor 4-like protein 2 (MORF4L2), found in Homo sapiens (Human).